A 164-amino-acid polypeptide reads, in one-letter code: FMN reductase (NADH) RutF (164 aa).

This sequence belongs to the non-flavoprotein flavin reductase family. RutF subfamily.

The catalysed reaction is FMNH2 + NAD(+) = FMN + NADH + 2 H(+). Catalyzes the reduction of FMN to FMNH2 which is used to reduce pyrimidine by RutA via the Rut pathway. This chain is FMN reductase (NADH) RutF, found in Escherichia coli O81 (strain ED1a).